A 332-amino-acid polypeptide reads, in one-letter code: L-lactate dehydrogenase A-like 6A (332 aa).

N-acetylalanine is present on Ala-2. Residues Lys-5 and Lys-57 each carry the N6-acetyllysine; alternate modification. Lys-5 carries the post-translational modification N6-succinyllysine; alternate. 29 to 57 lines the NAD(+) pocket; it reads GSVGVACAISILLKGLSDELVLVDVDEGK. Lys-57 is covalently cross-linked (Glycyl lysine isopeptide (Lys-Gly) (interchain with G-Cter in SUMO2); alternate). The residue at position 81 (Lys-81) is an N6-acetyllysine. Arg-99 serves as a coordination point for NAD(+). Arg-106 serves as a coordination point for substrate. Lys-118 bears the N6-acetyllysine; alternate mark. Residue Lys-118 is modified to N6-succinyllysine; alternate. Asn-138 lines the NAD(+) pocket. Residues Asn-138 and Arg-169 each coordinate substrate. His-193 serves as the catalytic Proton acceptor. Residue Lys-232 is modified to N6-acetyllysine. Residue Tyr-239 is modified to Phosphotyrosine. Lys-243 bears the N6-acetyllysine mark. Thr-248 contributes to the substrate binding site. The residue at position 309 (Thr-309) is a Phosphothreonine. Lys-318 is subject to N6-acetyllysine; alternate. Lys-318 is subject to N6-succinyllysine; alternate. At Thr-322 the chain carries Phosphothreonine.

It belongs to the LDH/MDH superfamily. LDH family. Testis-specific.

It is found in the cytoplasm. It carries out the reaction (S)-lactate + NAD(+) = pyruvate + NADH + H(+). Its pathway is fermentation; pyruvate fermentation to lactate; (S)-lactate from pyruvate: step 1/1. Its function is as follows. Catalyzes the interconversion of L-lactate and pyruvate with nicotinamide adenine dinucleotide NAD(+) as a coenzyme. Significantly increases the transcriptional activity of JUN, when overexpressed. The chain is L-lactate dehydrogenase A-like 6A (LDHAL6A) from Homo sapiens (Human).